The primary structure comprises 79 residues: Cytochrome c-551 (79 aa).

The span at 1–14 (DGQSIYESGTSPTC) shows a compositional bias: polar residues. Positions 1–35 (DGQSIYESGTSPTCASCHDRGTAGAPKINEPGDWD) are disordered. Heme c-binding residues include cysteine 14, cysteine 17, histidine 18, and methionine 55.

In terms of processing, binds 1 heme c group covalently per subunit.

The protein is Cytochrome c-551 of Halorhodospira halochloris (Ectothiorhodospira halochloris).